A 104-amino-acid polypeptide reads, in one-letter code: Large ribosomal subunit protein uL24 (104 aa).

This sequence belongs to the universal ribosomal protein uL24 family. In terms of assembly, part of the 50S ribosomal subunit.

In terms of biological role, one of two assembly initiator proteins, it binds directly to the 5'-end of the 23S rRNA, where it nucleates assembly of the 50S subunit. One of the proteins that surrounds the polypeptide exit tunnel on the outside of the subunit. The protein is Large ribosomal subunit protein uL24 of Citrobacter koseri (strain ATCC BAA-895 / CDC 4225-83 / SGSC4696).